Consider the following 81-residue polypeptide: uncharacterized protein (81 aa).

A signal peptide spans 1–22 (MNKKLSIIFLIFALIASVLCSA). A disordered region spans residues 29 to 81 (HSSSTTTTTSSSGGTSGTDSSINTGSSYSGSGSGSGSTGGSGSGSGSGTAKWK). The span at 30–58 (SSSTTTTTSSSGGTSGTDSSINTGSSYSG) shows a compositional bias: low complexity. The span at 59-75 (SGSGSGSTGGSGSGSGS) shows a compositional bias: gly residues.

It is found in the secreted. This is an uncharacterized protein from Dictyostelium discoideum (Social amoeba).